A 595-amino-acid polypeptide reads, in one-letter code: Adenine deaminase 2 (595 aa).

This sequence belongs to the metallo-dependent hydrolases superfamily. Adenine deaminase family. It depends on Mn(2+) as a cofactor.

The catalysed reaction is adenine + H2O + H(+) = hypoxanthine + NH4(+). The chain is Adenine deaminase 2 from Rhizobium etli (strain ATCC 51251 / DSM 11541 / JCM 21823 / NBRC 15573 / CFN 42).